The chain runs to 262 residues: Probable proteasome subunit beta type-7 (262 aa).

It belongs to the peptidase T1B family. As to quaternary structure, the 26S proteasome consists of a 20S proteasome core and two 19S regulatory subunits. The 20S proteasome core is composed of 28 subunits that are arranged in four stacked rings, resulting in a barrel-shaped structure. The two end rings are each formed by seven alpha subunits, and the two central rings are each formed by seven beta subunits. The catalytic chamber with the active sites is on the inside of the barrel.

The protein localises to the cytoplasm. Its subcellular location is the nucleus. Non-catalytic component of the proteasome, a multicatalytic proteinase complex which is characterized by its ability to cleave peptides with Arg, Phe, Tyr, Leu, and Glu adjacent to the leaving group at neutral or slightly basic pH. The proteasome has an ATP-dependent proteolytic activity. The protein is Probable proteasome subunit beta type-7 of Schizosaccharomyces pombe (strain 972 / ATCC 24843) (Fission yeast).